The following is a 204-amino-acid chain: Somatotropin (204 aa).

The signal sequence occupies residues 1-17 (MDRVILLLSVVSLGVSS). Position 18 is a pyrrolidone carboxylic acid (Gln-18). Residue His-36 coordinates Zn(2+). A disulfide bridge links Cys-69 with Cys-177. Glu-186 is a Zn(2+) binding site. Cys-194 and Cys-202 form a disulfide bridge.

It belongs to the somatotropin/prolactin family.

Its subcellular location is the secreted. Functionally, growth hormone plays an important role in growth control and is involved in the regulation of several anabolic processes. Implicated as an osmoregulatory substance important for seawater adaptation. The sequence is that of Somatotropin (gh) from Sebastes schlegelii (Korean rockfish).